Reading from the N-terminus, the 178-residue chain is Caveolin-1 (178 aa).

Residue Ser-2 is modified to N-acetylserine. Ser-2 carries the post-translational modification Phosphoserine. A required for homooligomerization region spans residues 2–94 (SGGKYVDSEG…WKASFTTFTV (93 aa)). The Cytoplasmic portion of the chain corresponds to 2 to 104 (SGGKYVDSEG…TKYWFYRLLS (103 aa)). Lys-5 bears the N6-acetyllysine; alternate mark. A Glycyl lysine isopeptide (Lys-Gly) (interchain with G-Cter in ubiquitin); alternate cross-link involves residue Lys-5. Tyr-6 is subject to Phosphotyrosine. Ser-9 bears the Phosphoserine mark. Tyr-14 carries the post-translational modification Phosphotyrosine; by ABL1. At Tyr-25 the chain carries Phosphotyrosine. Glycyl lysine isopeptide (Lys-Gly) (interchain with G-Cter in ubiquitin) cross-links involve residues Lys-26, Lys-30, Lys-39, Lys-47, and Lys-57. The interval 82–94 (DGIWKASFTTFTV) is interaction with CAVIN3. Positions 105-125 (AVFGIPMALIWGIYFAIVSFL) form an intramembrane region, helical. At 126-178 (HIWVVVPYIKSFLIEIQCISRVYSIYIHTFCDPLFEAFGKVFSNIRINTQKEI) the chain is on the cytoplasmic side. Positions 131 to 142 (VPYIKSFLIEIQ) are interacts with SPRY1, SPRY2, SPRY3 and SPRY4. S-palmitoyl cysteine attachment occurs at residues Cys-143 and Cys-156. The segment at 149–160 (SIYIHTFCDPLF) is interacts with SPRY1, SPRY2, and SPRY4. Residues 167–178 (FSNIRINTQKEI) are interacts with SPRY1, SPRY2, SPRY3 and SPRY4.

Belongs to the caveolin family. In terms of assembly, homooligomer. Interacts (via the N-terminus) with DPP4; the interaction is direct. Forms a stable heterooligomeric complex with CAV2 that targets to lipid rafts and drives caveolae formation. Interacts with PACSIN2; this interaction induces membrane tubulation. Interacts with BMX, BTK, CTNNB1, CDH1, GLIPR2, JUP, NOSTRIN, SNAP25 and STX1A. Interacts with SLC7A9. Interacts with TGFBR1. Interacts with CAVIN3 (via leucine-zipper domain) in a cholesterol-sensitive manner. Interacts with CAVIN1. Interacts with EHD2 in a cholesterol-dependent manner. Forms a ternary complex with UBXN6 and VCP; mediates CAV1 targeting to lysosomes for degradation. Interacts with ABCG1; this interaction regulates ABCG1-mediated cholesterol efflux. Interacts with NEU3; this interaction enhances NEU3 sialidase activity within caveola. Interacts (via C-terminus) with SPRY1, SPRY2 (via C-terminus), SPRY3, and SPRY4. Phosphorylated at Tyr-14 by ABL1 in response to oxidative stress. In terms of processing, ubiquitinated. Undergo monoubiquitination and multi- and/or polyubiquitination. Monoubiquitination of N-terminal lysines promotes integration in a ternary complex with UBXN6 and VCP which promotes oligomeric CAV1 targeting to lysosomes for degradation. Ubiquitinated by ZNRF1; leading to degradation and modulation of the TLR4-mediated immune response.

The protein resides in the golgi apparatus membrane. Its subcellular location is the cell membrane. It is found in the membrane. It localises to the caveola. The protein localises to the membrane raft. In terms of biological role, may act as a scaffolding protein within caveolar membranes. Forms a stable heterooligomeric complex with CAV2 that targets to lipid rafts and drives caveolae formation. Mediates the recruitment of CAVIN proteins (CAVIN1/2/3/4) to the caveolae. Interacts directly with G-protein alpha subunits and can functionally regulate their activity. Involved in the costimulatory signal essential for T-cell receptor (TCR)-mediated T-cell activation. Its binding to DPP4 induces T-cell proliferation and NF-kappa-B activation in a T-cell receptor/CD3-dependent manner. Recruits CTNNB1 to caveolar membranes and may regulate CTNNB1-mediated signaling through the Wnt pathway. Negatively regulates TGFB1-mediated activation of SMAD2/3 by mediating the internalization of TGFBR1 from membrane rafts leading to its subsequent degradation. Binds 20(S)-hydroxycholesterol (20(S)-OHC). The protein is Caveolin-1 (CAV1) of Rhinolophus ferrumequinum (Greater horseshoe bat).